The following is a 342-amino-acid chain: Methylthioribose-1-phosphate isomerase (342 aa).

Substrate is bound by residues 49-51, Arg86, and Gln187; that span reads RGA. The active-site Proton donor is Asp228. Substrate is bound at residue 238–239; it reads NK.

This sequence belongs to the eIF-2B alpha/beta/delta subunits family. MtnA subfamily.

The catalysed reaction is 5-(methylsulfanyl)-alpha-D-ribose 1-phosphate = 5-(methylsulfanyl)-D-ribulose 1-phosphate. Its pathway is amino-acid biosynthesis; L-methionine biosynthesis via salvage pathway; L-methionine from S-methyl-5-thio-alpha-D-ribose 1-phosphate: step 1/6. Catalyzes the interconversion of methylthioribose-1-phosphate (MTR-1-P) into methylthioribulose-1-phosphate (MTRu-1-P). The protein is Methylthioribose-1-phosphate isomerase of Serratia proteamaculans (strain 568).